The following is a 505-amino-acid chain: Maturase K (505 aa).

It belongs to the intron maturase 2 family. MatK subfamily.

It is found in the plastid. It localises to the chloroplast. Usually encoded in the trnK tRNA gene intron. Probably assists in splicing its own and other chloroplast group II introns. This Calycanthus floridus (Eastern sweetshrub) protein is Maturase K.